Reading from the N-terminus, the 102-residue chain is Small ribosomal subunit protein uS10 (102 aa).

It belongs to the universal ribosomal protein uS10 family. Part of the 30S ribosomal subunit.

In terms of biological role, involved in the binding of tRNA to the ribosomes. The sequence is that of Small ribosomal subunit protein uS10 from Pyrococcus abyssi (strain GE5 / Orsay).